The primary structure comprises 138 residues: Large ribosomal subunit protein uL16 (138 aa).

The protein belongs to the universal ribosomal protein uL16 family. Part of the 50S ribosomal subunit.

Its function is as follows. Binds 23S rRNA and is also seen to make contacts with the A and possibly P site tRNAs. The polypeptide is Large ribosomal subunit protein uL16 (Acidiphilium cryptum (strain JF-5)).